The primary structure comprises 554 residues: Hydroxylamine reductase (554 aa).

Residues cysteine 3, cysteine 6, cysteine 18, and cysteine 25 each contribute to the [2Fe-2S] cluster site. Residues histidine 252, glutamate 276, cysteine 320, cysteine 408, cysteine 436, cysteine 461, glutamate 495, and lysine 497 each coordinate hybrid [4Fe-2O-2S] cluster. The residue at position 408 (cysteine 408) is a Cysteine persulfide.

This sequence belongs to the HCP family. [2Fe-2S] cluster is required as a cofactor. The cofactor is hybrid [4Fe-2O-2S] cluster.

The protein resides in the cytoplasm. It catalyses the reaction A + NH4(+) + H2O = hydroxylamine + AH2 + H(+). Its function is as follows. Catalyzes the reduction of hydroxylamine to form NH(3) and H(2)O. The protein is Hydroxylamine reductase of Shewanella sp. (strain MR-7).